A 93-amino-acid polypeptide reads, in one-letter code: Small ribosomal subunit protein bS20c (93 aa).

This sequence belongs to the bacterial ribosomal protein bS20 family.

It localises to the plastid. Its subcellular location is the chloroplast. Functionally, binds directly to 16S ribosomal RNA. This chain is Small ribosomal subunit protein bS20c, found in Thalassiosira pseudonana (Marine diatom).